A 334-amino-acid chain; its full sequence is Lipoyl synthase (334 aa).

The tract at residues 1–36 is disordered; the sequence is MSDALIAPNASSSEAPQSPAEHYDPTRKQKSADKTA. The span at 7–20 shows a compositional bias: low complexity; that stretch reads APNASSSEAPQSPA. Basic and acidic residues predominate over residues 21 to 36; it reads EHYDPTRKQKSADKTA. [4Fe-4S] cluster-binding residues include C81, C86, C92, C107, C111, C114, and S321. The Radical SAM core domain maps to 92 to 310; sequence CFGKGTATFM…EEEAYKMGFT (219 aa).

This sequence belongs to the radical SAM superfamily. Lipoyl synthase family. [4Fe-4S] cluster is required as a cofactor.

The protein localises to the cytoplasm. It carries out the reaction [[Fe-S] cluster scaffold protein carrying a second [4Fe-4S](2+) cluster] + N(6)-octanoyl-L-lysyl-[protein] + 2 oxidized [2Fe-2S]-[ferredoxin] + 2 S-adenosyl-L-methionine + 4 H(+) = [[Fe-S] cluster scaffold protein] + N(6)-[(R)-dihydrolipoyl]-L-lysyl-[protein] + 4 Fe(3+) + 2 hydrogen sulfide + 2 5'-deoxyadenosine + 2 L-methionine + 2 reduced [2Fe-2S]-[ferredoxin]. The protein operates within protein modification; protein lipoylation via endogenous pathway; protein N(6)-(lipoyl)lysine from octanoyl-[acyl-carrier-protein]: step 2/2. Functionally, catalyzes the radical-mediated insertion of two sulfur atoms into the C-6 and C-8 positions of the octanoyl moiety bound to the lipoyl domains of lipoate-dependent enzymes, thereby converting the octanoylated domains into lipoylated derivatives. This is Lipoyl synthase from Cupriavidus taiwanensis (strain DSM 17343 / BCRC 17206 / CCUG 44338 / CIP 107171 / LMG 19424 / R1) (Ralstonia taiwanensis (strain LMG 19424)).